A 344-amino-acid chain; its full sequence is Selenide, water dikinase (344 aa).

Cys-16 is a catalytic residue. Residues Lys-19 and 47–49 (SRD) each bind ATP. Asp-50 lines the Mg(2+) pocket. ATP-binding positions include Asp-67, Asp-90, and 138–140 (GHS). Asp-90 provides a ligand contact to Mg(2+). Asp-226 contributes to the Mg(2+) binding site.

It belongs to the selenophosphate synthase 1 family. Class I subfamily. Homodimer. It depends on Mg(2+) as a cofactor.

It carries out the reaction hydrogenselenide + ATP + H2O = selenophosphate + AMP + phosphate + 2 H(+). Synthesizes selenophosphate from selenide and ATP. The sequence is that of Selenide, water dikinase from Bordetella bronchiseptica (strain ATCC BAA-588 / NCTC 13252 / RB50) (Alcaligenes bronchisepticus).